A 582-amino-acid chain; its full sequence is Aspartate--tRNA ligase (582 aa).

Glu-174 contributes to the L-aspartate binding site. The aspartate stretch occupies residues 198-201; the sequence is QITK. Arg-220 lines the L-aspartate pocket. Residues 220-222 and Gln-229 each bind ATP; that span reads RDE. His-443 lines the L-aspartate pocket. Glu-477 provides a ligand contact to ATP. Arg-484 contacts L-aspartate. 529-532 lines the ATP pocket; that stretch reads GLDR.

This sequence belongs to the class-II aminoacyl-tRNA synthetase family. Type 1 subfamily. In terms of assembly, homodimer.

It localises to the cytoplasm. The catalysed reaction is tRNA(Asp) + L-aspartate + ATP = L-aspartyl-tRNA(Asp) + AMP + diphosphate. Catalyzes the attachment of L-aspartate to tRNA(Asp) in a two-step reaction: L-aspartate is first activated by ATP to form Asp-AMP and then transferred to the acceptor end of tRNA(Asp). The protein is Aspartate--tRNA ligase of Streptococcus pyogenes serotype M3 (strain ATCC BAA-595 / MGAS315).